The chain runs to 386 residues: 2,3-diketo-5-methylthiopentyl-1-phosphate enolase (386 aa).

Lys85 functions as the Proton acceptor in the catalytic mechanism. Residues Lys131, 157–160 (KDDE), His248, Gly316, and 338–339 (GT) each bind substrate. Lys157, Asp159, and Glu160 together coordinate Mg(2+). Lys157 is modified (N6-carboxylysine).

This sequence belongs to the RuBisCO large chain family. Type IV subfamily. Homodimer. Requires Mg(2+) as cofactor.

The enzyme catalyses 5-methylsulfanyl-2,3-dioxopentyl phosphate = 2-hydroxy-5-methylsulfanyl-3-oxopent-1-enyl phosphate. Its pathway is amino-acid biosynthesis; L-methionine biosynthesis via salvage pathway; L-methionine from S-methyl-5-thio-alpha-D-ribose 1-phosphate: step 3/6. In terms of biological role, catalyzes the enolization of 2,3-diketo-5-methylthiopentyl-1-phosphate (DK-MTP-1-P) into 2-hydroxy-3-keto-5-methylthiopentenyl-1-phosphate (HK-MTPenyl-1-P). This is 2,3-diketo-5-methylthiopentyl-1-phosphate enolase (mtnW) from Microcystis aeruginosa.